A 358-amino-acid polypeptide reads, in one-letter code: Peptide chain release factor 1 (358 aa).

Gln-233 carries the post-translational modification N5-methylglutamine.

This sequence belongs to the prokaryotic/mitochondrial release factor family. Methylated by PrmC. Methylation increases the termination efficiency of RF1.

Its subcellular location is the cytoplasm. Functionally, peptide chain release factor 1 directs the termination of translation in response to the peptide chain termination codons UAG and UAA. The polypeptide is Peptide chain release factor 1 (Staphylococcus carnosus (strain TM300)).